The sequence spans 38 residues: Potassium channel toxin alpha-KTx 6.4 (38 aa).

4 cysteine pairs are disulfide-bonded: C6/C27, C12/C32, C16/C34, and C22/C37.

The protein belongs to the short scorpion toxin superfamily. Potassium channel inhibitor family. Alpha-KTx 06 subfamily. In terms of tissue distribution, expressed by the venom gland.

Its subcellular location is the secreted. Its function is as follows. Potently, completely and reversibly blocks voltage-gated potassium channel Kv1.2/KCNA2 and Shaker B (Sh). Also blocks small conductance (SK) calcium-activated potassium channel (KCNN). The polypeptide is Potassium channel toxin alpha-KTx 6.4 (Pandinus imperator (Emperor scorpion)).